The following is a 364-amino-acid chain: Ribosomal RNA large subunit methyltransferase M (364 aa).

Residues serine 198, 231–234 (APGG), aspartate 250, aspartate 270, and aspartate 286 contribute to the S-adenosyl-L-methionine site. The active-site Proton acceptor is the lysine 315.

It belongs to the class I-like SAM-binding methyltransferase superfamily. RNA methyltransferase RlmE family. RlmM subfamily. As to quaternary structure, monomer.

The protein resides in the cytoplasm. It catalyses the reaction cytidine(2498) in 23S rRNA + S-adenosyl-L-methionine = 2'-O-methylcytidine(2498) in 23S rRNA + S-adenosyl-L-homocysteine + H(+). Functionally, catalyzes the 2'-O-methylation at nucleotide C2498 in 23S rRNA. The sequence is that of Ribosomal RNA large subunit methyltransferase M from Thauera aminoaromatica.